Reading from the N-terminus, the 273-residue chain is Epidermal growth factor-like protein 7 (273 aa).

The N-terminal stretch at 1 to 23 (MRGSQEVLLMWLLVLAVGGTEHA) is a signal peptide. One can recognise an EMI domain in the interval 27 to 104 (GRRVCAVRAH…TSGLPGACGA (78 aa)). Disulfide bonds link cysteine 31–cysteine 89, cysteine 56–cysteine 62, cysteine 88–cysteine 102, cysteine 107–cysteine 117, cysteine 111–cysteine 123, cysteine 125–cysteine 134, cysteine 141–cysteine 152, cysteine 148–cysteine 161, and cysteine 163–cysteine 176. The 33-residue stretch at 103–135 (GAAICQPPCRNGGSCVQPGRCRCPAGWRGDTCQ) folds into the EGF-like 1 domain. Positions 130-132 (RGD) match the Cell attachment site motif. The region spanning 137–177 (DVDECSARRGGCPQRCVNTAGSYWCQCWEGHSLSADGTLCV) is the EGF-like 2; calcium-binding domain. Positions 192–219 (VDSAMKEEVQRLQSRVDLLEEKLQLVLA) form a coiled coil.

As to quaternary structure, interacts with ITGAV/ITGB3 in an RGD-dependent manner, increasing endothelial cell's motility.

The protein localises to the secreted. The protein resides in the extracellular space. Functionally, regulates vascular tubulogenesis in vivo. Inhibits platelet-derived growth factor (PDGF)-BB-induced smooth muscle cell migration and promotes endothelial cell adhesion to the extracellular matrix and angiogenesis. The sequence is that of Epidermal growth factor-like protein 7 (EGFL7) from Homo sapiens (Human).